The chain runs to 742 residues: Phosphoribosylformylglycinamidine synthase subunit PurL (742 aa).

Residue His-50 is part of the active site. Positions 53 and 92 each coordinate ATP. Residue Glu-94 coordinates Mg(2+). Residues 95-98 (SHNH) and Arg-117 each bind substrate. His-96 serves as the catalytic Proton acceptor. Residue Asp-118 participates in Mg(2+) binding. Gln-241 serves as a coordination point for substrate. Asp-269 lines the Mg(2+) pocket. 313–315 (ESQ) contacts substrate. Residues Asp-494 and Gly-531 each contribute to the ATP site. A Mg(2+)-binding site is contributed by Asn-532. Ser-534 serves as a coordination point for substrate.

The protein belongs to the FGAMS family. In terms of assembly, monomer. Part of the FGAM synthase complex composed of 1 PurL, 1 PurQ and 2 PurS subunits.

The protein resides in the cytoplasm. It carries out the reaction N(2)-formyl-N(1)-(5-phospho-beta-D-ribosyl)glycinamide + L-glutamine + ATP + H2O = 2-formamido-N(1)-(5-O-phospho-beta-D-ribosyl)acetamidine + L-glutamate + ADP + phosphate + H(+). It participates in purine metabolism; IMP biosynthesis via de novo pathway; 5-amino-1-(5-phospho-D-ribosyl)imidazole from N(2)-formyl-N(1)-(5-phospho-D-ribosyl)glycinamide: step 1/2. In terms of biological role, part of the phosphoribosylformylglycinamidine synthase complex involved in the purines biosynthetic pathway. Catalyzes the ATP-dependent conversion of formylglycinamide ribonucleotide (FGAR) and glutamine to yield formylglycinamidine ribonucleotide (FGAM) and glutamate. The FGAM synthase complex is composed of three subunits. PurQ produces an ammonia molecule by converting glutamine to glutamate. PurL transfers the ammonia molecule to FGAR to form FGAM in an ATP-dependent manner. PurS interacts with PurQ and PurL and is thought to assist in the transfer of the ammonia molecule from PurQ to PurL. The polypeptide is Phosphoribosylformylglycinamidine synthase subunit PurL (Sinorhizobium fredii (strain NBRC 101917 / NGR234)).